The primary structure comprises 34 residues: Photosystem II reaction center protein M (34 aa).

Residues 5 to 25 (ILAFIATALFILVPTAFLLII) traverse the membrane as a helical segment.

This sequence belongs to the PsbM family. As to quaternary structure, PSII is composed of 1 copy each of membrane proteins PsbA, PsbB, PsbC, PsbD, PsbE, PsbF, PsbH, PsbI, PsbJ, PsbK, PsbL, PsbM, PsbT, PsbX, PsbY, PsbZ, Psb30/Ycf12, at least 3 peripheral proteins of the oxygen-evolving complex and a large number of cofactors. It forms dimeric complexes.

The protein localises to the plastid. It is found in the chloroplast thylakoid membrane. One of the components of the core complex of photosystem II (PSII). PSII is a light-driven water:plastoquinone oxidoreductase that uses light energy to abstract electrons from H(2)O, generating O(2) and a proton gradient subsequently used for ATP formation. It consists of a core antenna complex that captures photons, and an electron transfer chain that converts photonic excitation into a charge separation. This subunit is found at the monomer-monomer interface. The sequence is that of Photosystem II reaction center protein M from Phaseolus vulgaris (Kidney bean).